Here is a 131-residue protein sequence, read N- to C-terminus: Insertion element IS1 protein InsB (131 aa).

Belongs to the transposase 27 family.

Its function is as follows. Absolutely required for transposition of IS1. This chain is Insertion element IS1 protein InsB (insB), found in Shigella sonnei.